Consider the following 313-residue polypeptide: Metaxin-3 (313 aa).

The tract at residues 280-313 (EKMDDNLRSSPQHRPHRHEAKPSAPASDRNSTPA) is disordered.

Belongs to the metaxin family. As to quaternary structure, part of a large protein complex spanning both mitochondrial membranes termed the mitochondrial intermembrane space bridging (MIB) complex.

It localises to the mitochondrion. It is found in the mitochondrion outer membrane. Its function is as follows. Could function in transport of proteins into the mitochondrion. This is Metaxin-3 (mtx3) from Danio rerio (Zebrafish).